We begin with the raw amino-acid sequence, 436 residues long: Protein FAM83A (436 aa).

The segment at 1-298 is DUF1669; it reads MSRSRHVGKI…LYASSKPLMG (298 aa). A disordered region spans residues 73–95; it reads AQAKEPPDAPDSAGGAESGPRGL. Residues S301, S329, S350, and S359 each carry the phosphoserine modification. The interval 302-371 is disordered; sequence PRLVAPFQPN…APIPPTVPRL (70 aa). The span at 321 to 349 shows a compositional bias: polar residues; sequence LSGTSDSASDRTSSNPFSSLSTGSNAHNQ. A compositionally biased stretch (low complexity) spans 350–359; it reads SLSTSSGPSS.

Belongs to the FAM83 family. In terms of assembly, directly interacts (via DUF1669) with casein kinase isoforms CSNK1A1, CSNK1A1L, CSNK1D and CSNK1E. May be phosphorylated upon EGFR activation. In terms of tissue distribution, widely expressed, with relatively higher expression levels in adipose tissues, especially in epididymal and inguinal white adipose tissue (at protein level).

It is found in the cytoplasm. Its subcellular location is the mitochondrion. Its function is as follows. Involved in mitochondrial maintenance during adipogenesis. May be acting by playing a role in the maintenance of normal mitochondrial function. This is Protein FAM83A from Mus musculus (Mouse).